The sequence spans 558 residues: Alpha-1,3-mannosyltransferase MNT2 (558 aa).

Over 1 to 6 (MRRKNR) the chain is Cytoplasmic. The chain crosses the membrane as a helical; Signal-anchor for type II membrane protein span at residues 7-27 (LFILVVLLGIVLVVYYSQLNS). Residues 28 to 558 (LDLVEPVQSS…QIVDIWNKDI (531 aa)) are Lumenal-facing. N-linked (GlcNAc...) asparagine glycosylation occurs at N187.

It belongs to the MNN1/MNT family.

It localises to the golgi apparatus membrane. Its pathway is protein modification; protein glycosylation. Mannosyltransferase involved in adding the 4th and 5th mannose residues of O-linked glycans. This Saccharomyces cerevisiae (strain ATCC 204508 / S288c) (Baker's yeast) protein is Alpha-1,3-mannosyltransferase MNT2 (MNT2).